The following is a 396-amino-acid chain: Ribosomal RNA large subunit methyltransferase I (396 aa).

Residues 2 to 81 form the PUA domain; that stretch reads TVRLILAKGR…EVIDCAFFIR (80 aa).

The protein belongs to the methyltransferase superfamily. RlmI family.

It localises to the cytoplasm. It carries out the reaction cytidine(1962) in 23S rRNA + S-adenosyl-L-methionine = 5-methylcytidine(1962) in 23S rRNA + S-adenosyl-L-homocysteine + H(+). In terms of biological role, specifically methylates the cytosine at position 1962 (m5C1962) of 23S rRNA. The protein is Ribosomal RNA large subunit methyltransferase I of Yersinia pestis bv. Antiqua (strain Antiqua).